The primary structure comprises 517 residues: MVFPIEAIVGLVTFTFLFFFLWTKKSQKPSKPLPPKIPGGWPVIGHLFHFNDDGDDRPLARKLGDLADKYGPVFTFRLGLPLVLVVSSYEAVKDCFSTNDAIFSNRPAFLYGDYLGYNNAMLFLANYGPYWRKNRKLVIQEVLSASRLEKFKHVRFARIQASIKNLYTRIDGNSSTINLTDWLEELNFGLIVKMIAGKNYESGKGDEQVERFKKAFKDFMILSMEFVLWDAFPIPLFKWVDFQGHVKAMKRTFKDIDSVFQNWLEEHINKREKMEVNAEGNEQDFIDVVLSKMSNEYLGEGYSRDTVIKATVFSLVLDAADTVALHINWGMALLINNQKALTKAQEEIDTKVGKDRWVEESDIKDLVYLQAIVKEVLRLYPPGPLLVPHENVEDCVVSGYHIPKGTRLFANVMKLQRDPKLWSDPDTFDPERFIATDIDFRGQYYKYIPFGSGRRSCPGMTYALQVEHLTMAHLIQGFNYRTPNDEPLDMKEGAGITIRKVNPVELIIAPRLAPELY.

Residues 2-22 (VFPIEAIVGLVTFTFLFFFLW) form a helical membrane-spanning segment. Residue Lys-254 forms a Glycyl lysine isopeptide (Lys-Gly) (interchain with G-Cter in ubiquitin) linkage. Position 457 (Cys-457) interacts with heme.

Belongs to the cytochrome P450 family. CYP82E2 subfamily. It depends on heme as a cofactor. As to expression, expressed at low levels in green leaves.

It localises to the membrane. The catalysed reaction is (S)-nicotine + reduced [NADPH--hemoprotein reductase] + O2 = (S)-nornicotine + formaldehyde + oxidized [NADPH--hemoprotein reductase] + H2O + H(+). It participates in alkaloid biosynthesis; nicotine biosynthesis. Functionally, involved in the biosynthesis of pyridine alkaloid natural products, leading mainly to the production of anabasine, anatabine, nicotine and nornicotine, effective deterrents against herbivores with antiparasitic and pesticide properties (neurotoxins); nornicotine serves as the precursor in the synthesis of the carcinogen compound N'-nitrosonornicotine (NNN). Catalyzes the demethylation of nicotine to form nornicotine. The protein is Nicotine N-demethylase CYP82E4 of Nicotiana tabacum (Common tobacco).